The following is a 335-amino-acid chain: Dihydroorotate dehydrogenase (quinone) (335 aa).

Residues 59–63 (AGLDK) and threonine 83 contribute to the FMN site. Lysine 63 is a substrate binding site. 108–112 (NRMGF) contacts substrate. The FMN site is built by asparagine 136 and asparagine 169. Asparagine 169 is a substrate binding site. Serine 172 acts as the Nucleophile in catalysis. Asparagine 174 is a substrate binding site. Residues lysine 214 and threonine 242 each coordinate FMN. 243–244 (NT) is a binding site for substrate. Residues glycine 265, glycine 294, and 315–316 (YS) each bind FMN.

The protein belongs to the dihydroorotate dehydrogenase family. Type 2 subfamily. In terms of assembly, monomer. FMN serves as cofactor.

It localises to the cell membrane. The catalysed reaction is (S)-dihydroorotate + a quinone = orotate + a quinol. It participates in pyrimidine metabolism; UMP biosynthesis via de novo pathway; orotate from (S)-dihydroorotate (quinone route): step 1/1. Its function is as follows. Catalyzes the conversion of dihydroorotate to orotate with quinone as electron acceptor. This Neisseria meningitidis serogroup A / serotype 4A (strain DSM 15465 / Z2491) protein is Dihydroorotate dehydrogenase (quinone).